Consider the following 327-residue polypeptide: Ribose-phosphate pyrophosphokinase (327 aa).

ATP contacts are provided by residues 40 to 42 (DGE) and 99 to 100 (RQ). 2 residues coordinate Mg(2+): H134 and D173. Residue K196 is part of the active site. Residues R198, D222, and 226-230 (DTANT) contribute to the D-ribose 5-phosphate site.

Belongs to the ribose-phosphate pyrophosphokinase family. Class I subfamily. As to quaternary structure, homohexamer. The cofactor is Mg(2+).

It is found in the cytoplasm. It carries out the reaction D-ribose 5-phosphate + ATP = 5-phospho-alpha-D-ribose 1-diphosphate + AMP + H(+). It functions in the pathway metabolic intermediate biosynthesis; 5-phospho-alpha-D-ribose 1-diphosphate biosynthesis; 5-phospho-alpha-D-ribose 1-diphosphate from D-ribose 5-phosphate (route I): step 1/1. Functionally, involved in the biosynthesis of the central metabolite phospho-alpha-D-ribosyl-1-pyrophosphate (PRPP) via the transfer of pyrophosphoryl group from ATP to 1-hydroxyl of ribose-5-phosphate (Rib-5-P). The protein is Ribose-phosphate pyrophosphokinase of Neisseria meningitidis serogroup A / serotype 4A (strain DSM 15465 / Z2491).